Consider the following 105-residue polypeptide: Saimiri transformation-associated protein (105 aa).

The Cytoplasmic segment spans residues 1–75; the sequence is MASEPNLRYP…GPPGPSGLPG (75 aa). Positions 1–75 are disordered; sequence MASEPNLRYP…GPPGPSGLPG (75 aa). The region spanning 15–74 is the Collagen-like domain; it reads GDRGPQGPPGPPGPQGPPGPQGPPGPQGPPGPQGPPGPQGPPGPQGPPGPPGPPGPSGLP. A compositionally biased stretch (pro residues) spans 20–71; that stretch reads QGPPGPPGPQGPPGPQGPPGPQGPPGPQGPPGPQGPPGPQGPPGPPGPPGPS. A helical membrane pass occupies residues 76–96; it reads LFVTNLLLGIIILLLLIIVAI. The Extracellular segment spans residues 97 to 105; that stretch reads LLVSKLVVN.

Binds to host RAS and TRAF2.

Its subcellular location is the host membrane. Acts synergistically with Tip to stimulate NF-kappa-B activity and interleukin-2 gene expression by binding to host TRAF proteins. Activation of NF-kappa-B protects lymphocytes from apoptosis, thereby facilitating viral induced cell transformation. The protein is Saimiri transformation-associated protein of Saimiriine herpesvirus 2 (strain 484-77) (SaHV-2).